Here is a 436-residue protein sequence, read N- to C-terminus: Trigger factor (436 aa).

The region spanning 163-248 (GDRVTIDFEG…VKKIEAAHLP (86 aa)) is the PPIase FKBP-type domain.

It belongs to the FKBP-type PPIase family. Tig subfamily.

It localises to the cytoplasm. The catalysed reaction is [protein]-peptidylproline (omega=180) = [protein]-peptidylproline (omega=0). Functionally, involved in protein export. Acts as a chaperone by maintaining the newly synthesized protein in an open conformation. Functions as a peptidyl-prolyl cis-trans isomerase. The polypeptide is Trigger factor (Polaromonas naphthalenivorans (strain CJ2)).